The sequence spans 335 residues: Beta-ketoacyl-[acyl-carrier-protein] synthase III 3 (335 aa).

Active-site residues include Cys114 and His256. An ACP-binding region spans residues 257 to 261 (QANHR). Residue Asn286 is part of the active site.

It belongs to the thiolase-like superfamily. FabH family. As to quaternary structure, homodimer.

It localises to the cytoplasm. It carries out the reaction malonyl-[ACP] + acetyl-CoA + H(+) = 3-oxobutanoyl-[ACP] + CO2 + CoA. Its pathway is lipid metabolism; fatty acid biosynthesis. Catalyzes the condensation reaction of fatty acid synthesis by the addition to an acyl acceptor of two carbons from malonyl-ACP. Catalyzes the first condensation reaction which initiates fatty acid synthesis and may therefore play a role in governing the total rate of fatty acid production. Possesses both acetoacetyl-ACP synthase and acetyl transacylase activities. Its substrate specificity determines the biosynthesis of branched-chain and/or straight-chain of fatty acids. The protein is Beta-ketoacyl-[acyl-carrier-protein] synthase III 3 of Streptomyces coelicolor (strain ATCC BAA-471 / A3(2) / M145).